Reading from the N-terminus, the 344-residue chain is Mitochondrial genome maintenance exonuclease 1 (344 aa).

Catalysis depends on residues Asp-238, Asp-251, and Lys-253. Ser-343 is subject to Phosphoserine.

This sequence belongs to the MGME1 family.

It is found in the mitochondrion. Functionally, metal-dependent single-stranded DNA (ssDNA) exonuclease involved in mitochondrial genome maintenance. Has preference for 5'-3' exonuclease activity but is also capable of endonuclease activity on linear substrates. Necessary for maintenance of proper 7S DNA levels. Probably involved in mitochondrial DNA (mtDNA) repair, possibly via the processing of displaced DNA containing Okazaki fragments during RNA-primed DNA synthesis on the lagging strand or via processing of DNA flaps during long-patch base excision repair. Specifically binds 5-hydroxymethylcytosine (5hmC)-containing DNA in stem cells. In Homo sapiens (Human), this protein is Mitochondrial genome maintenance exonuclease 1.